We begin with the raw amino-acid sequence, 378 residues long: Transcription elongation factor TFIIS (378 aa).

Residue M1 is modified to N-acetylmethionine. The 80-residue stretch at 10-89 (EGAKKAADAA…EIWKKVVIEE (80 aa)) folds into the TFIIS N-terminal domain. Residues 210–333 (VRDKIRELLV…DCERGLAAKA (124 aa)) form the TFIIS central domain. A TFIIS-type zinc finger spans residues 336–376 (DQFKCGRCGQRKCTYYQMQTRSADEPMTTYVTCVNCDNHWK). Zn(2+) contacts are provided by C340, C343, C368, and C371.

As to expression, expressed in roots, leaves and flowers.

The protein resides in the nucleus. In terms of biological role, necessary for efficient RNA polymerase II transcription elongation past template-encoded arresting sites. Involved in the control of seed dormancy and germination. This chain is Transcription elongation factor TFIIS, found in Arabidopsis thaliana (Mouse-ear cress).